The sequence spans 656 residues: Cyclic AMP-dependent transcription factor ATF-6 alpha (656 aa).

Positions 1–137 (MESPFSPVLP…SPSSVEPLKE (137 aa)) are transcription activation. Residues 1–377 (MESPFSPVLP…VMIVLAFIML (377 aa)) are Cytoplasmic-facing. Lysine 75 is covalently cross-linked (Glycyl lysine isopeptide (Lys-Gly) (interchain with G-Cter in SUMO2)). The disordered stretch occupies residues 75-169 (KAEPQPLSPA…MSSKPSVQPK (95 aa)). Composition is skewed to low complexity over residues 78-101 (PQPL…SCSS) and 111-121 (LLSSSQSPLSL). Residue lysine 139 forms a Glycyl lysine isopeptide (Lys-Gly) (interchain with G-Cter in ubiquitin) linkage. Positions 293-356 (VLRRQQRMIK…DEVVSENQRL (64 aa)) constitute a bZIP domain. A basic motif region spans residues 295 to 326 (RRQQRMIKNRESACQSRKKKKEYMLGLEARLK). The tract at residues 335 to 342 (LKKENGSL) is leucine-zipper. Residues 378–398 (NYGPMSMLEQESRRVKPSVSP) form a helical; Signal-anchor for type II membrane protein membrane-spanning segment. Residues 391–429 (RVKPSVSPANQRRHLLEFSAKEVKDTSDGDNQKDSYSYD) are disordered. Residues 399-656 (ANQRRHLLEF…VVSTIPESLQ (258 aa)) are Lumenal-facing. Residues 404 to 427 (HLLEFSAKEVKDTSDGDNQKDSYS) show a composition bias toward basic and acidic residues. Positions 455–575 (QPLINTTESL…ATTHNKTTRP (121 aa)) are interaction with THBS4. Residues asparagine 459, asparagine 570, and asparagine 629 are each glycosylated (N-linked (GlcNAc...) asparagine). Residues 632 to 650 (STFFGSPPTTTETTHVVST) show a composition bias toward low complexity. A disordered region spans residues 632 to 656 (STFFGSPPTTTETTHVVSTIPESLQ).

This sequence belongs to the bZIP family. ATF subfamily. Interacts with XBP1 isoform 2; the interaction occurs in a ER stress-dependent manner. Interacts with LACC1. As to quaternary structure, interacts with THBS4 (via EGF-like 3; calcium-binding domain) which facilitates its processing, activation and nuclear translocation. Interacts (via lumenal domain) with THBS1. In terms of assembly, homodimer and heterodimer with ATF6-beta. The dimer interacts with the nuclear transcription factor Y (NF-Y) trimer through direct binding to NF-Y subunit C (NF-YC). Also interacts with the transcription factors GTF2I, YY1 and SRF. Post-translationally, during unfolded protein response, a fragment of approximately 50 kDa containing the cytoplasmic transcription factor domain is released by proteolysis. The cleavage seems to be performed sequentially by site-1 (MBTPS1, S1P) and site-2 (MBTPS2, S2P) proteases. In terms of processing, N-glycosylated; in its luminal domain. The glycosylation status may serve as a sensor for ER homeostasis, resulting in ATF6 activation to trigger the unfolded protein response (UPR). Ubiquitinated by RNF186 at Lys-139, which is required for pattern recognition receptor-induced unfolded protein response-associated outcomes.

It is found in the endoplasmic reticulum membrane. It localises to the golgi apparatus membrane. Its subcellular location is the nucleus. In terms of biological role, precursor of the transcription factor form (Processed cyclic AMP-dependent transcription factor ATF-6 alpha), which is embedded in the endoplasmic reticulum membrane. Endoplasmic reticulum stress promotes processing of this form, releasing the transcription factor form that translocates into the nucleus, where it activates transcription of genes involved in the unfolded protein response (UPR). Its function is as follows. Transcription factor that initiates the unfolded protein response (UPR) during endoplasmic reticulum stress by activating transcription of genes involved in the UPR. Binds DNA on the 5'-CCAC[GA]-3'half of the ER stress response element (ERSE) (5'-CCAAT-N(9)-CCAC[GA]-3') and of ERSE II (5'-ATTGG-N-CCACG-3'). Binding to ERSE requires binding of NF-Y to ERSE. Could also be involved in activation of transcription by the serum response factor. May play a role in foveal development and cone function in the retina. This chain is Cyclic AMP-dependent transcription factor ATF-6 alpha (Atf6), found in Mus musculus (Mouse).